The following is a 110-amino-acid chain: MSDTFQRIAPEQARQLRENGAQVVDIRDPQSFAVGHISGSRHIDNHSVADFIAAADLDAPLVVVCYHGNSSQSAAAYFIQQGFSDVYSLDGGFELWRSVYPADTSSGEAE.

The region spanning 17–105 (RENGAQVVDI…WRSVYPADTS (89 aa)) is the Rhodanese domain. The active-site Cysteine persulfide intermediate is C65.

It belongs to the GlpE family.

The protein resides in the cytoplasm. The enzyme catalyses thiosulfate + hydrogen cyanide = thiocyanate + sulfite + 2 H(+). The catalysed reaction is thiosulfate + [thioredoxin]-dithiol = [thioredoxin]-disulfide + hydrogen sulfide + sulfite + 2 H(+). Functionally, transferase that catalyzes the transfer of sulfur from thiosulfate to thiophilic acceptors such as cyanide or dithiols. May function in a CysM-independent thiosulfate assimilation pathway by catalyzing the conversion of thiosulfate to sulfite, which can then be used for L-cysteine biosynthesis. The sequence is that of Thiosulfate sulfurtransferase GlpE from Pseudomonas aeruginosa (strain LESB58).